We begin with the raw amino-acid sequence, 312 residues long: Glyceraldehyde-3-phosphate dehydrogenase, cytosolic (312 aa).

NAD(+)-binding positions include 5–6 and Asp27; that span reads RI. D-glyceraldehyde 3-phosphate contacts are provided by residues 144-146, Thr175, 204-205, and Arg227; these read SCT and TG. The active-site Nucleophile is Cys145. Asn309 provides a ligand contact to NAD(+).

It belongs to the glyceraldehyde-3-phosphate dehydrogenase family. As to quaternary structure, homotetramer.

The protein localises to the cytoplasm. It carries out the reaction D-glyceraldehyde 3-phosphate + phosphate + NAD(+) = (2R)-3-phospho-glyceroyl phosphate + NADH + H(+). It participates in carbohydrate degradation; glycolysis; pyruvate from D-glyceraldehyde 3-phosphate: step 1/5. Its function is as follows. Key enzyme in glycolysis that catalyzes the first step of the pathway by converting D-glyceraldehyde 3-phosphate (G3P) into 3-phospho-D-glyceroyl phosphate. Essential for the maintenance of cellular ATP levels and carbohydrate metabolism. The protein is Glyceraldehyde-3-phosphate dehydrogenase, cytosolic (GapC) of Scenedesmus vacuolatus (Green alga).